A 373-amino-acid chain; its full sequence is Glutamate 5-kinase (373 aa).

An ATP-binding site is contributed by Lys15. Ser55, Asp142, and Asn154 together coordinate substrate. ATP contacts are provided by residues 174–175 (TD) and 216–222 (TGGMATK). In terms of domain architecture, PUA spans 281 to 359 (AGSIVVDAGA…SEIERILGFR (79 aa)).

Belongs to the glutamate 5-kinase family.

It is found in the cytoplasm. The enzyme catalyses L-glutamate + ATP = L-glutamyl 5-phosphate + ADP. It participates in amino-acid biosynthesis; L-proline biosynthesis; L-glutamate 5-semialdehyde from L-glutamate: step 1/2. In terms of biological role, catalyzes the transfer of a phosphate group to glutamate to form L-glutamate 5-phosphate. The sequence is that of Glutamate 5-kinase from Geobacter sp. (strain M21).